The following is a 937-amino-acid chain: Isoleucine--tRNA ligase (937 aa).

A 'HIGH' region motif is present at residues 57–67; sequence PYANGPIHMGH. Glu-556 lines the L-isoleucyl-5'-AMP pocket. The short motif at 597–601 is the 'KMSKS' region element; the sequence is KMSKS. ATP is bound at residue Lys-600. The Zn(2+) site is built by Cys-895, Cys-898, Cys-915, and Cys-918.

The protein belongs to the class-I aminoacyl-tRNA synthetase family. IleS type 1 subfamily. Monomer. Zn(2+) is required as a cofactor.

The protein resides in the cytoplasm. The enzyme catalyses tRNA(Ile) + L-isoleucine + ATP = L-isoleucyl-tRNA(Ile) + AMP + diphosphate. In terms of biological role, catalyzes the attachment of isoleucine to tRNA(Ile). As IleRS can inadvertently accommodate and process structurally similar amino acids such as valine, to avoid such errors it has two additional distinct tRNA(Ile)-dependent editing activities. One activity is designated as 'pretransfer' editing and involves the hydrolysis of activated Val-AMP. The other activity is designated 'posttransfer' editing and involves deacylation of mischarged Val-tRNA(Ile). This Levilactobacillus brevis (strain ATCC 367 / BCRC 12310 / CIP 105137 / JCM 1170 / LMG 11437 / NCIMB 947 / NCTC 947) (Lactobacillus brevis) protein is Isoleucine--tRNA ligase.